The primary structure comprises 304 residues: Dihydroorotate dehydrogenase B (NAD(+)), catalytic subunit (304 aa).

FMN-binding positions include Ser-20 and 44 to 45 (KA). Residues Lys-44 and 68-72 (NAIGL) each bind substrate. FMN contacts are provided by Asn-98 and Asn-126. Position 126 (Asn-126) interacts with substrate. Catalysis depends on Cys-129, which acts as the Nucleophile. Residues Lys-164 and Ile-190 each contribute to the FMN site. 191–192 (NT) serves as a coordination point for substrate. Residues Gly-216, 242–243 (GG), and 264–265 (GT) contribute to the FMN site.

The protein belongs to the dihydroorotate dehydrogenase family. Type 1 subfamily. As to quaternary structure, heterotetramer of 2 PyrK and 2 PyrD type B subunits. The cofactor is FMN.

It localises to the cytoplasm. The catalysed reaction is (S)-dihydroorotate + NAD(+) = orotate + NADH + H(+). It participates in pyrimidine metabolism; UMP biosynthesis via de novo pathway; orotate from (S)-dihydroorotate (NAD(+) route): step 1/1. Catalyzes the conversion of dihydroorotate to orotate with NAD(+) as electron acceptor. This chain is Dihydroorotate dehydrogenase B (NAD(+)), catalytic subunit (pyrD), found in Oceanobacillus iheyensis (strain DSM 14371 / CIP 107618 / JCM 11309 / KCTC 3954 / HTE831).